Here is a 931-residue protein sequence, read N- to C-terminus: MRVKDTLNLGKTKFPMRGNLPKREAEWEKNWEDQKFYERRLKLNEGHERFDLHDGPPFANGNIHMGHALNKITKDIIVRSKNMEGYYAPYVPGWDTHGLPIEQQLTKQGVDRKTMDRAAYRELCRKFAMEQVEKQRTDFKRLGVMGDWDHPYITLLPEFEAAEIRVFGKMYENGYIYQGKKPVYWSWSSESTLAEAEVEYHDVESPSIYISFPVKDGKGKLSEENTYFLIWTTTPWTIPSNQGIAVNPKFDYSVVEVGDRRYVVGTDRLSAVAEILGWDSYKTVQHLKGTDMEYMVAKHPYIEGRDSLLMEAVYVTDDDGTGLVHTASGFGEDDYNTAMRYGFDVLSPMDNKGCFTEEIPDPDLVGKFYTDTNEIVKDKLSAAGNLLHYSTFVHSAAHDWRTKKPVVYRATTQWFASISKFRDQILDQIEKTTFYPAWGKTRLYNMIKDRGDWVISRQRAWGVPLPIFYAEDGTAIVTHETIEHVADLFAKEGSNAWFTHPVEELLPEGFTSEHSPNGKFTKETDILDVWFDSGSSWSGVQALGRAVHYPTSMYLEGSDQYRGWFNSSLITSVATNGVAPYKSVLSQGFTLDGQGRKMSKSLGNTIAPNDVIKQMGAEIIRLWVASVDASGDVGVSMDILRQVSEGYRKIRNTFRYMLANTADFDPEKDRVAYKDLRKIDQYLEVKLNDLVAESIVNYDKYDFADVYKLVFKFITNDLSAFYLDFAKDVLYIEGKDSHARRSMQTVIYDAAVKLAKILAPILPHTMGEVWGYLKEKEEDVYLSNFPEIEDYADADDLKESWGEFMKLRDDVLKALEEARDQKLIGKSFEASVTVYPGEAAKAALDKLAGEDFREILIVSNLVMGQGEVPAEAKQFDQASVLVRRAEGEVCPRCRMYRTDLGADSRLPQLCGRCASIVAGDHPEILEEGLED.

Positions 57 to 67 (PFANGNIHMGH) match the 'HIGH' region motif. Glutamate 556 contacts L-isoleucyl-5'-AMP. Residues 597–601 (KMSKS) carry the 'KMSKS' region motif. Lysine 600 serves as a coordination point for ATP. Cysteine 890, cysteine 893, cysteine 910, and cysteine 913 together coordinate Zn(2+).

The protein belongs to the class-I aminoacyl-tRNA synthetase family. IleS type 1 subfamily. As to quaternary structure, monomer. Requires Zn(2+) as cofactor.

The protein localises to the cytoplasm. The enzyme catalyses tRNA(Ile) + L-isoleucine + ATP = L-isoleucyl-tRNA(Ile) + AMP + diphosphate. Catalyzes the attachment of isoleucine to tRNA(Ile). As IleRS can inadvertently accommodate and process structurally similar amino acids such as valine, to avoid such errors it has two additional distinct tRNA(Ile)-dependent editing activities. One activity is designated as 'pretransfer' editing and involves the hydrolysis of activated Val-AMP. The other activity is designated 'posttransfer' editing and involves deacylation of mischarged Val-tRNA(Ile). The chain is Isoleucine--tRNA ligase from Lactobacillus delbrueckii subsp. bulgaricus (strain ATCC BAA-365 / Lb-18).